The chain runs to 157 residues: AP-1 complex subunit sigma-2 (157 aa).

Belongs to the adaptor complexes small subunit family. In terms of assembly, adaptor protein complex 1 (AP-1) is a heterotetramer composed of two large adaptins (gamma-type subunit AP1G1 and beta-type subunit AP1B1), a medium adaptin (mu-type subunit AP1M1 or AP1M2) and a small adaptin (sigma-type subunit AP1S1 or AP1S2 or AP1S3). Binds to MUC1. In terms of tissue distribution, widely expressed.

The protein localises to the golgi apparatus. Its subcellular location is the cytoplasmic vesicle membrane. The protein resides in the membrane. It is found in the clathrin-coated pit. Functionally, subunit of clathrin-associated adaptor protein complex 1 that plays a role in protein sorting in the late-Golgi/trans-Golgi network (TGN) and/or endosomes. The AP complexes mediate both the recruitment of clathrin to membranes and the recognition of sorting signals within the cytosolic tails of transmembrane cargo molecules. This Homo sapiens (Human) protein is AP-1 complex subunit sigma-2 (AP1S2).